We begin with the raw amino-acid sequence, 435 residues long: Cytochrome c biogenesis protein CcsB (435 aa).

Transmembrane regions (helical) follow at residues 14–34 (LRLAILLLLLIAGASALGTIL), 72–92 (SVWFLSLLAWLGLALILCSWR), and 162–182 (VGPLLVHTGLVLLLIGAAWGA).

Belongs to the Ccs1/CcsB family. As to quaternary structure, may interact with CcsA.

Its subcellular location is the cellular thylakoid membrane. Functionally, required during biogenesis of c-type cytochromes (cytochrome c6 and cytochrome f) at the step of heme attachment. The chain is Cytochrome c biogenesis protein CcsB from Synechococcus sp. (strain CC9311).